The chain runs to 34 residues: Stromal 70 kDa heat shock-related protein, chloroplastic (34 aa).

The protein belongs to the heat shock protein 70 family.

The protein localises to the plastid. It is found in the chloroplast stroma. In terms of biological role, interacts with newly imported chloroplast proteins to assist in their maturation. This chain is Stromal 70 kDa heat shock-related protein, chloroplastic, found in Cucurbita maxima (Pumpkin).